A 208-amino-acid polypeptide reads, in one-letter code: Dephospho-CoA kinase (208 aa).

Residues 5-201 (IVALTGGIGS…QRYLALAASA (197 aa)) enclose the DPCK domain. 13 to 18 (GSGKST) contacts ATP.

This sequence belongs to the CoaE family.

It localises to the cytoplasm. The enzyme catalyses 3'-dephospho-CoA + ATP = ADP + CoA + H(+). The protein operates within cofactor biosynthesis; coenzyme A biosynthesis; CoA from (R)-pantothenate: step 5/5. In terms of biological role, catalyzes the phosphorylation of the 3'-hydroxyl group of dephosphocoenzyme A to form coenzyme A. The polypeptide is Dephospho-CoA kinase (Sodalis glossinidius (strain morsitans)).